Here is an 896-residue protein sequence, read N- to C-terminus: Androgen receptor (896 aa).

The segment at 1-534 (MEVQLGLGRV…PIDYYFPPQK (534 aa)) is modulating. The interval 1-563 (MEVQLGLGRV…GSCKVFFKRA (563 aa)) is interaction with ZNF318. Disordered stretches follow at residues 35–152 (QNPG…LSLL) and 178–218 (LLQQ…YLGG). Over residues 54–78 (LQQQQLQQQETSPRRQQQQQQQPSE) the composition is skewed to low complexity. Residue Ser-65 is modified to Phosphoserine; by CDK9. Ser-81 carries the phosphoserine modification. The segment covering 178 to 189 (LLQQQQQQQQQQ) has biased composition (low complexity). Positions 190–199 (EAVSEGNSSG) are enriched in polar residues. Position 215 is a phosphotyrosine; by CSK (Tyr-215). Ser-248 carries the post-translational modification Phosphoserine. At Tyr-259 the chain carries Phosphotyrosine; by CSK and TNK2. Phosphotyrosine; by CSK occurs at positions 299, 338, 349, and 354. Tyr-355 carries the post-translational modification Phosphotyrosine; by CSK and TNK2. Residue Lys-378 forms a Glycyl lysine isopeptide (Lys-Gly) (interchain with G-Cter in SUMO) linkage. A Phosphotyrosine; by CSK modification is found at Tyr-385. Residue Lys-497 forms a Glycyl lysine isopeptide (Lys-Gly) (interchain with G-Cter in SUMO) linkage. Tyr-511 and Tyr-528 each carry phosphotyrosine; by CSK. Residues 528–895 (YYFPPQKTCL…GKVKPIYFHT (368 aa)) are interaction with LPXN. Positions 535-608 (TCLICGDEAS…AGMTLGARKL (74 aa)) form a DNA-binding region, nuclear receptor. NR C4-type zinc fingers lie at residues 536–556 (CLIC…CGSC) and 572–596 (CASR…LRKC). Positions 548-638 (YGALTCGSCK…TEEPAQKLTV (91 aa)) are interaction with HIPK3. The interaction with CCAR1 stretch occupies residues 568 to 895 (QKYLCASRND…GKVKPIYFHT (328 aa)). The segment at 601–895 (MTLGARKLKK…GKVKPIYFHT (295 aa)) is interaction with KAT7. Ser-627 carries the phosphoserine; by STK4/MST1 modification. Residues 645-876 (ECQPIFLNVL…DFPEMMAEII (232 aa)) form the NR LBD domain. Asn-682 and Arg-729 together coordinate 17beta-hydroxy-5alpha-androstan-3-one. Residues Lys-822 and Lys-824 each participate in a glycyl lysine isopeptide (Lys-Gly) (interchain with G-Cter in ubiquitin) cross-link. Thr-854 lines the 17beta-hydroxy-5alpha-androstan-3-one pocket. The residue at position 892 (Tyr-892) is a Phosphotyrosine; by CSK.

Belongs to the nuclear hormone receptor family. NR3 subfamily. In terms of assembly, binds DNA as a homodimer. Part of a ternary complex containing AR, EFCAB6/DJBP and PARK7. Interacts with HIPK3 and NR0B2 in the presence of androgen. The ligand binding domain interacts with KAT7/HBO1 in the presence of dihydrotestosterone. Interacts with EFCAB6/DJBP, PQBP1, RANBP9, RBAK, SPDEF, SRA1, TGFB1I1 and RREB1. Interacts with ZMIZ1/ZIMP10 and ZMIZ2/ZMIP7 which both enhance its transactivation activity. Interacts with SLC30A9 and RAD54L2/ARIP4. Interacts with MACROD1 (via macro domain). Interacts via the ligand-binding domain with LXXLL and FXXLF motifs from NCOA1, NCOA2, NCOA3 and MAGEA11. Interacts (via nuclear receptor DNA binding domain and nuclear receptor ligand binding domain) with NCOA4. The AR N-terminal poly-Gln region binds Ran resulting in enhancement of AR-mediated transactivation. Ran-binding decreases as the poly-Gln length increases. Interacts with HIP1 (via coiled coil domain). Interacts (via ligand-binding domain) with TRIM68. Interacts with TNK2. Interacts with USP26. Interacts with RNF6. Interacts (regulated by RNF6 probably through polyubiquitination) with RNF14; regulates AR transcriptional activity. Interacts with PRMT2 and TRIM24. Interacts with RACK1. Interacts with RANBP10; this interaction enhances dihydrotestosterone-induced AR transcriptional activity. Interacts with PRPF6 in a hormone-independent way; this interaction enhances dihydrotestosterone-induced AR transcriptional activity. Interacts with STK4/MST1. Interacts with ZIPK/DAPK3. Interacts with LPXN. Interacts with MAK. Part of a complex containing AR, MAK and NCOA3. Interacts with CRY1. Interacts with CCAR1 and GATA2. Interacts with ZNF318. Interacts with BUD31. Interacts with ARID4A. Interacts with ARID4B. Interacts (via NR LBD domain) with ZBTB7A; the interaction is direct and androgen-dependent. Interacts with NCOR1. Interacts with NCOR2. Interacts with CRY2 in a ligand-dependent manner. In terms of processing, phosphorylated in prostate cancer cells in response to several growth factors including EGF. Phosphorylation is induced by c-Src kinase (CSK). Tyr-511 is one of the major phosphorylation sites and an increase in phosphorylation and Src kinase activity is associated with prostate cancer progression. Phosphorylation by TNK2 enhances the DNA-binding and transcriptional activity. Phosphorylation at Ser-65 by CDK9 regulates AR promoter selectivity and cell growth. Post-translationally, sumoylated on Lys-378 (major) and Lys-497. Ubiquitinated. Deubiquitinated by USP26. 'Lys-6' and 'Lys-27'-linked polyubiquitination by RNF6 modulates AR transcriptional activity and specificity. Palmitoylated by ZDHHC7 and ZDHHC21. Palmitoylation is required for plasma membrane targeting and for rapid intracellular signaling via ERK and AKT kinases and cAMP generation.

The protein localises to the nucleus. The protein resides in the cytoplasm. In terms of biological role, steroid hormone receptors are ligand-activated transcription factors that regulate eukaryotic gene expression and affect cellular proliferation and differentiation in target tissues. Transcription factor activity is modulated by bound coactivator and corepressor proteins like ZBTB7A that recruits NCOR1 and NCOR2 to the androgen response elements/ARE on target genes, negatively regulating androgen receptor signaling and androgen-induced cell proliferation. Transcription activation is also down-regulated by NR0B2. Activated, but not phosphorylated, by HIPK3 and ZIPK/DAPK3. The sequence is that of Androgen receptor (AR) from Sus scrofa (Pig).